Reading from the N-terminus, the 341-residue chain is NADH-quinone oxidoreductase subunit H 1 (341 aa).

A run of 8 helical transmembrane segments spans residues 13 to 33, 82 to 102, 115 to 135, 161 to 181, 190 to 210, 248 to 268, 277 to 297, and 317 to 337; these read LVVIGQSLLLLILLLITIAYI, GVFLLAPLVSCVLALAAWAVI, VGVLYILAVSSLSVYGIIMAG, IGFVIIAVLLCVGSLNLTAIV, LLGWYWLPLFPVFVIFYVSAL, YVAITTMCAMGAILFLGGWLP, WVPGIIWFMLKGFFMFFLFAM, and VFLPLSLVMVVIVAGVLQFAG.

Belongs to the complex I subunit 1 family. As to quaternary structure, NDH-1 is composed of 14 different subunits. Subunits NuoA, H, J, K, L, M, N constitute the membrane sector of the complex.

It localises to the cell inner membrane. The catalysed reaction is a quinone + NADH + 5 H(+)(in) = a quinol + NAD(+) + 4 H(+)(out). Its function is as follows. NDH-1 shuttles electrons from NADH, via FMN and iron-sulfur (Fe-S) centers, to quinones in the respiratory chain. The immediate electron acceptor for the enzyme in this species is believed to be ubiquinone. Couples the redox reaction to proton translocation (for every two electrons transferred, four hydrogen ions are translocated across the cytoplasmic membrane), and thus conserves the redox energy in a proton gradient. This subunit may bind ubiquinone. This chain is NADH-quinone oxidoreductase subunit H 1, found in Rhodopseudomonas palustris (strain BisB18).